A 1399-amino-acid chain; its full sequence is Dicer-like protein 2 (1399 aa).

The 177-residue stretch at 18–194 folds into the Helicase ATP-binding domain; sequence MVEESMQSNI…EDLQQIERNL (177 aa). Residue 31–38 participates in ATP binding; the sequence is MDTGSGKT. The short motif at 139–142 is the DEAH box element; sequence DEAH. The Helicase C-terminal domain occupies 364-549; that stretch reads KLQLLIKFLV…QSETGHRNFE (186 aa). The region spanning 562 to 656 is the Dicer dsRNA-binding fold domain; that stretch reads ASQHLHHFCS…LPARQEADDE (95 aa). 2 consecutive RNase III domains span residues 897–1054 and 1094–1270; these read LPSI…TVGG and LDVL…IDSL. The Mg(2+) site is built by Glu-1133, Asp-1256, and Glu-1259. Positions 1301 to 1370 constitute a DRBM domain; that stretch reads HPKERLGHLA…AWKAVGVLES (70 aa).

This sequence belongs to the helicase family. Dicer subfamily. Mg(2+) serves as cofactor. The cofactor is Mn(2+).

Dicer-like endonuclease involved in cleaving double-stranded RNA in the RNA interference (RNAi) pathway. Produces 21 to 25 bp dsRNAs (siRNAs) which target the selective destruction of homologous RNAs leading to sequence-specific suppression of gene expression, called post-transcriptional gene silencing (PTGS). Part of a broad host defense response against viral infection and transposons. In Phaeosphaeria nodorum (strain SN15 / ATCC MYA-4574 / FGSC 10173) (Glume blotch fungus), this protein is Dicer-like protein 2 (DCL2).